Reading from the N-terminus, the 129-residue chain is Ferredoxin-1 (129 aa).

Residues 29-120 form the 2Fe-2S ferredoxin-type domain; the sequence is SDMDLDDEDY…EVKIVYNAKH (92 aa). 4 residues coordinate [2Fe-2S] cluster: cysteine 64, cysteine 69, cysteine 72, and cysteine 103.

The protein belongs to the 2Fe2S plant-type ferredoxin family. It depends on [2Fe-2S] cluster as a cofactor.

Ferredoxins are iron-sulfur proteins that transfer electrons in a wide variety of metabolic reactions. The sequence is that of Ferredoxin-1 (fer1) from Haloarcula marismortui (strain ATCC 43049 / DSM 3752 / JCM 8966 / VKM B-1809) (Halobacterium marismortui).